Consider the following 586-residue polypeptide: Proton channel OTOP1 (586 aa).

Residues 1-52 (MVEHGGTDSMWLNKYNPAAASSASSSSSSDAENKLFSRLKVSLTKKYPQKNA) lie on the Cytoplasmic side of the membrane. The helical transmembrane segment at 53-74 (ELLSAQYGTNLLLLGVSVMLAL) threads the bilayer. At 75-82 (AAQSGPVK) the chain is on the extracellular side. The chain crosses the membrane as a helical span at residues 83 to 106 (EEHLLSFITVLMLVQLVWMLCYMI). Residues 107-124 (RRERERSPVPERDAHAGA) are Cytoplasmic-facing. A helical membrane pass occupies residues 125-147 (SWIRGGLTMLALLSLIMDAFRIG). Residues 148–157 (YFVGYHSCIS) lie on the Extracellular side of the membrane. The chain crosses the membrane as a helical span at residues 158 to 182 (AALGVYPIVHALHTISQVHFLWFHI). Over 183–190 (KDVIKKYE) the chain is Cytoplasmic. Residues 191-217 (TFERFGVIHAVFTNLLLWCNGVMSETE) form a helical membrane-spanning segment. Over 218–255 (HFMHNHRRRLIEMGYANLSTVDVQPHCNCTTSVCSMFS) the chain is Extracellular. A helical membrane pass occupies residues 256–281 (TSLYYLYPFNIEYHIFVSAMLFVMWK). The Cytoplasmic portion of the chain corresponds to 282–303 (NIGRTLDRHSNRKRRSTGSTGL). The chain crosses the membrane as a helical span at residues 304–326 (LLGPLGGLVALASSVSVLVVYLI). The Extracellular segment spans residues 327-336 (HLEKTEEMHE). A helical membrane pass occupies residues 337-362 (AAVSMFYYYGVAMMACMCVGSGTGLL). Residues 363-380 (VYRMENRPMDTGSNPART) are Cytoplasmic-facing. Residues 381 to 405 (LDTELLLASSLGSWLMSWCSVVASV) form a helical membrane-spanning segment. At 406-417 (AEAGQKSPSFSW) the chain is on the extracellular side. The helical transmembrane segment at 418–438 (TSLTYSLLLVLEKCIQNLFIV) threads the bilayer. The Cytoplasmic segment spans residues 439–518 (ESLYRRHSEE…TPGRKRQILK (80 aa)). The segment at 484–505 (PAAGSHALSRKQPDAPLPAGQR) is disordered. Residues 519 to 537 (NICMFLFMCNISLWILPAF) traverse the membrane as a helical segment. The Extracellular segment spans residues 538-555 (GCRPQYDNPLENETFGTS). Residues 556 to 579 (VWTTVLNVAIPLNLFYRMHSVASL) traverse the membrane as a helical segment. Topologically, residues 580 to 586 (FEVFRKV) are cytoplasmic.

The protein belongs to the otopetrin family. In terms of assembly, homodimer.

The protein localises to the cell membrane. It is found in the cell projection. It localises to the microvillus. It carries out the reaction H(+)(in) = H(+)(out). Activated by both acid and alkali, with proton influx in response to extracellular acid and proton efflux during alkali stimulation. Inhibited by Zn(2+); this inhibition is thought to be pH-sensitive. Currents evoked in response to mild acid (pH 6.0) stimulus may also be mildly potentiated by exposure to Zn(2+). Activated by NH(4)Cl. Proton-selective ion channel. Biphasically modulated by acid and alkali, mediating proton influx and efflux in response to extracellular acid and base stimulation, respectively. May be involved in acid and base perception. Sensor for ammonium chloride (NH(4)Cl) in taste receptor cells. NH(4)Cl acts by increasing the intracellular pH, thereby generating a driving force for proton entry through OTOP1 channel. Plays a role in the regulation of Ca(2+) flux in response to purigenic (ATP, ADP and UDP) stimuli, leading to increase in cytosolic Ca(2+) due to influx of extracellular calcium. May play this role by inhibiting P2Y purinoceptor-mediated Ca(2+) release in a Ca(2+)-dependent manner and promote an influx of Ca(2+) in response to ATP. Through this mechanism and possibly others, plays a role in the formation and function of calcium carbonate-based structures in the vestibular system of the inner ear, called otoconia, that sense gravity and linear acceleration. In Danio rerio (Zebrafish), this protein is Proton channel OTOP1.